Here is a 609-residue protein sequence, read N- to C-terminus: Major facilitator superfamily domain-containing protein 6-like protein A (609 aa).

2 consecutive transmembrane segments (helical) span residues 41–61 and 78–98; these read LGLG…VHLL and FFIM…AYYP. A disordered region spans residues 201-241; sequence SGKAQKVMSSKSAASNSKQRSSLNNHTSPYATHPNVSHHPS. Residues 207-230 are compositionally biased toward polar residues; it reads VMSSKSAASNSKQRSSLNNHTSPY. The next 9 membrane-spanning stretches (helical) occupy residues 265-285, 307-327, 340-360, 388-408, 420-440, 452-472, 475-495, 513-535, and 541-561; these read IFLI…PLEW, LWIW…FLVD, VFFH…LSTL, IVLT…TQNF, ELYM…LYFF, WMVA…SFLW, WSVL…WWAI, LALR…GFII, and AVLY…FLLV.

The protein belongs to the major facilitator superfamily. MFSD6 family.

It localises to the membrane. The protein is Major facilitator superfamily domain-containing protein 6-like protein A (mfsd6l-a) of Xenopus laevis (African clawed frog).